A 104-amino-acid polypeptide reads, in one-letter code: ATP-dependent Clp protease adapter protein ClpS (104 aa).

Belongs to the ClpS family. As to quaternary structure, binds to the N-terminal domain of the chaperone ClpA.

Involved in the modulation of the specificity of the ClpAP-mediated ATP-dependent protein degradation. This Bordetella avium (strain 197N) protein is ATP-dependent Clp protease adapter protein ClpS.